We begin with the raw amino-acid sequence, 99 residues long: Small ribosomal subunit protein bS20 (99 aa).

The segment covering 1–20 (MASAKPKKKNPRLASGRKRV) has biased composition (basic residues). The segment at 1–21 (MASAKPKKKNPRLASGRKRVR) is disordered.

Belongs to the bacterial ribosomal protein bS20 family.

Its function is as follows. Binds directly to 16S ribosomal RNA. The sequence is that of Small ribosomal subunit protein bS20 from Verminephrobacter eiseniae (strain EF01-2).